A 208-amino-acid chain; its full sequence is Pyridoxine/pyridoxamine 5'-phosphate oxidase (208 aa).

FMN is bound by residues arginine 53–lysine 58, tyrosine 68–serine 69, lysine 75, and glutamine 100. Lysine 58 contributes to the substrate binding site. The substrate site is built by tyrosine 118, arginine 122, and serine 126. FMN-binding positions include glutamine 135 to serine 136 and tryptophan 180. Arginine 186–histidine 188 provides a ligand contact to substrate. Position 190 (arginine 190) interacts with FMN.

The protein belongs to the pyridoxamine 5'-phosphate oxidase family. Homodimer. FMN is required as a cofactor.

The catalysed reaction is pyridoxamine 5'-phosphate + O2 + H2O = pyridoxal 5'-phosphate + H2O2 + NH4(+). It carries out the reaction pyridoxine 5'-phosphate + O2 = pyridoxal 5'-phosphate + H2O2. Its pathway is cofactor metabolism; pyridoxal 5'-phosphate salvage; pyridoxal 5'-phosphate from pyridoxamine 5'-phosphate: step 1/1. It participates in cofactor metabolism; pyridoxal 5'-phosphate salvage; pyridoxal 5'-phosphate from pyridoxine 5'-phosphate: step 1/1. Its function is as follows. Catalyzes the oxidation of either pyridoxine 5'-phosphate (PNP) or pyridoxamine 5'-phosphate (PMP) into pyridoxal 5'-phosphate (PLP). This Xylella fastidiosa (strain Temecula1 / ATCC 700964) protein is Pyridoxine/pyridoxamine 5'-phosphate oxidase.